The primary structure comprises 506 residues: Sucrose transport protein SUT3 (506 aa).

Topologically, residues 1–20 (MAVDMELDGGGDGKGKAPPQ) are cytoplasmic. Residues 21-41 (ISLSGLFLACMVAGGVQYGWA) form a helical membrane-spanning segment. Over 42–54 (LQLSLLTPYVQTL) the chain is Extracellular. Residues 55–75 (GIPHALTSVMWLCGPIAGLIV) form a helical membrane-spanning segment. Topologically, residues 76–94 (QPCVGLYSDKCTSSLGRRR) are cytoplasmic. Residues 95-115 (PFILTGCIIICISVIVIGFSS) traverse the membrane as a helical segment. Residues 116 to 135 (DIGYALGDTTEDCKVYRGPR) are Extracellular-facing. A helical transmembrane segment spans residues 136–156 (YHAAAAFILGFWLLDFSNNTV). The Cytoplasmic segment spans residues 157-171 (QGPARALMADLSGRH). The chain crosses the membrane as a helical span at residues 172 to 192 (GPSAANAIFCSWMALGNILGY). Residues 193-220 (SSGSTNDWHKWFPFLMTRACCEACANLK) lie on the Extracellular side of the membrane. Residues 221–241 (AAFLVAVVFLGLSTAVTMVFA) form a helical membrane-spanning segment. At 242 to 275 (REVALDPVAAAKRNEGEASGLLAVFKGMKNLPVG) the chain is on the cytoplasmic side. Residues 276-296 (MPSVLIVTGLTWLSWFPFILF) form a helical membrane-spanning segment. At 297–327 (DTDWMGREIYHGRPDGSPAEVTAFQEGVRQG) the chain is on the extracellular side. A helical transmembrane segment spans residues 328–348 (AFGLLLNSIVLGISSFLIEPM). The Cytoplasmic portion of the chain corresponds to 349 to 355 (CRRLGAR). The chain crosses the membrane as a helical span at residues 356–376 (AVWVMSSAVVCVAMAAVSVLS). Over 377–404 (AWSLGDFGGSVQDAARAPAEEGGVRASA) the chain is Extracellular. The helical transmembrane segment at 405–425 (LALFVFLGLPFAVLCSVPFAV) threads the bilayer. Residues 426 to 441 (TAQLAASRGGGQGLCT) are Cytoplasmic-facing. The chain crosses the membrane as a helical span at residues 442–462 (GVLNISIVVPQMAIALGAGPW). Over 463–470 (DELFGEGN) the chain is Extracellular. The chain crosses the membrane as a helical span at residues 471–491 (IPAFAMASVFAAAAAAAGVVL). At 492 to 506 (LPKVSVRSVSMAGGH) the chain is on the cytoplasmic side.

The protein belongs to the glycoside-pentoside-hexuronide (GPH) cation symporter transporter (TC 2.A.2.4) family. Homodimer. Widely expressed. Highest expression in sink leaves and lowest in germinating seeds.

Its subcellular location is the cell membrane. Its pathway is glycan biosynthesis; sucrose metabolism. Responsible for the transport of sucrose into the cell, with the concomitant uptake of protons (symport system). May also transport other glucosides. This chain is Sucrose transport protein SUT3 (SUT3), found in Oryza sativa subsp. japonica (Rice).